Here is a 434-residue protein sequence, read N- to C-terminus: Ribosomal RNA-processing protein 14 (434 aa).

S2 carries the post-translational modification N-acetylserine. 3 stretches are compositionally biased toward basic and acidic residues: residues 32–58 (KSQEQWKAKKKTKEQSKNDKLKKLDPE), 70–79 (VMKKKEKDAK), and 95–105 (KQKEATSKVEG). The disordered stretch occupies residues 32–257 (KSQEQWKAKK…RFKKGKKDSE (226 aa)). Positions 121-140 (PDEDEEEEEDIKVIFDDEGN) are enriched in acidic residues. The segment covering 144 to 178 (LESKKDTTEPDRSVEKKSITEEEKLQRKKNLEALR) has biased composition (basic and acidic residues). Coiled-coil stretches lie at residues 162-230 (ITEE…EIAS) and 293-360 (AKND…QKRK). The segment covering 220-241 (EQEQDQDEIASDSDMEDIDSDL) has biased composition (acidic residues). Basic and acidic residues predominate over residues 375-392 (TISERQKRREENLRIRKD). Residues 375–434 (TISERQKRREENLRIRKDNKGKKRNKQEKMKRKYVGSAVPKKRAGFEGRLKTGKKKGGPK) form a disordered region. Basic residues-rich tracts occupy residues 393–408 (NKGKKRNKQEKMKRKY) and 425–434 (KTGKKKGGPK).

This sequence belongs to the SURF6 family. As to quaternary structure, component of the 90S and 60S pre-ribosomal particles.

It is found in the nucleus. The protein localises to the nucleolus. Its function is as follows. Involved in ribosome biogenesis and cell polarity. Required for the synthesis of both 40S and 60S ribosomal subunits and may also play some direct role in correct positioning of the mitotic spindle during mitosis. This chain is Ribosomal RNA-processing protein 14 (RRP14), found in Saccharomyces cerevisiae (strain ATCC 204508 / S288c) (Baker's yeast).